The primary structure comprises 320 residues: Glutathione synthetase (320 aa).

Residues 133–317 (KMYTLQFAAV…LGEKVICWLE (185 aa)) enclose the ATP-grasp domain. ATP is bound at residue 159–215 (LEEHGAAVLKPLGGKAGEGILFLDPGDRNFNSLVEISTQHGKEPVMVQRFLPEAKEG). Positions 288 and 290 each coordinate Mg(2+).

Belongs to the prokaryotic GSH synthase family. Requires Mg(2+) as cofactor. It depends on Mn(2+) as a cofactor.

The enzyme catalyses gamma-L-glutamyl-L-cysteine + glycine + ATP = glutathione + ADP + phosphate + H(+). The protein operates within sulfur metabolism; glutathione biosynthesis; glutathione from L-cysteine and L-glutamate: step 2/2. The polypeptide is Glutathione synthetase (Synechocystis sp. (strain ATCC 27184 / PCC 6803 / Kazusa)).